The chain runs to 79 residues: Acyl carrier protein (79 aa).

The 76-residue stretch at 2–77 folds into the Carrier domain; it reads SSIEERVKKI…QAVDYINKHL (76 aa). O-(pantetheine 4'-phosphoryl)serine is present on S37.

It belongs to the acyl carrier protein (ACP) family. Post-translationally, 4'-phosphopantetheine is transferred from CoA to a specific serine of apo-ACP by AcpS. This modification is essential for activity because fatty acids are bound in thioester linkage to the sulfhydryl of the prosthetic group.

The protein resides in the cytoplasm. It functions in the pathway lipid metabolism; fatty acid biosynthesis. Carrier of the growing fatty acid chain in fatty acid biosynthesis. This is Acyl carrier protein from Alkalilimnicola ehrlichii (strain ATCC BAA-1101 / DSM 17681 / MLHE-1).